Here is a 425-residue protein sequence, read N- to C-terminus: UDP-N-acetylglucosamine 1-carboxyvinyltransferase (425 aa).

Residue 22 to 23 participates in phosphoenolpyruvate binding; that stretch reads KN. A UDP-N-acetyl-alpha-D-glucosamine-binding site is contributed by arginine 91. The active-site Proton donor is the cysteine 115. The residue at position 115 (cysteine 115) is a 2-(S-cysteinyl)pyruvic acid O-phosphothioketal. Residues 120–124, aspartate 309, and isoleucine 331 each bind UDP-N-acetyl-alpha-D-glucosamine; that span reads RPVDL.

It belongs to the EPSP synthase family. MurA subfamily.

Its subcellular location is the cytoplasm. The catalysed reaction is phosphoenolpyruvate + UDP-N-acetyl-alpha-D-glucosamine = UDP-N-acetyl-3-O-(1-carboxyvinyl)-alpha-D-glucosamine + phosphate. It participates in cell wall biogenesis; peptidoglycan biosynthesis. In terms of biological role, cell wall formation. Adds enolpyruvyl to UDP-N-acetylglucosamine. The protein is UDP-N-acetylglucosamine 1-carboxyvinyltransferase of Akkermansia muciniphila (strain ATCC BAA-835 / DSM 22959 / JCM 33894 / BCRC 81048 / CCUG 64013 / CIP 107961 / Muc).